Reading from the N-terminus, the 231-residue chain is NADH-ubiquinone oxidoreductase chain 4 (231 aa).

The next 7 membrane-spanning stretches (helical) occupy residues 1–21 (PIAG…YGII), 34–54 (MFLP…LTCL), 63–85 (IAYS…TPWG), 89–111 (AMAL…NTTY), 128–148 (ILPM…AIPP), 156–176 (LLIM…LGLS), and 211–231 (LLMI…ELII).

This sequence belongs to the complex I subunit 4 family.

The protein resides in the mitochondrion membrane. It catalyses the reaction a ubiquinone + NADH + 5 H(+)(in) = a ubiquinol + NAD(+) + 4 H(+)(out). In terms of biological role, core subunit of the mitochondrial membrane respiratory chain NADH dehydrogenase (Complex I) that is believed to belong to the minimal assembly required for catalysis. Complex I functions in the transfer of electrons from NADH to the respiratory chain. The immediate electron acceptor for the enzyme is believed to be ubiquinone. The sequence is that of NADH-ubiquinone oxidoreductase chain 4 (MT-ND4) from Agkistrodon piscivorus piscivorus (Eastern cottonmouth).